A 257-amino-acid chain; its full sequence is Deoxyribose-phosphate aldolase (257 aa).

The active-site Proton donor/acceptor is Asp-102. Lys-166 acts as the Schiff-base intermediate with acetaldehyde in catalysis. Residue Lys-198 is the Proton donor/acceptor of the active site.

This sequence belongs to the DeoC/FbaB aldolase family. DeoC type 2 subfamily.

Its subcellular location is the cytoplasm. It carries out the reaction 2-deoxy-D-ribose 5-phosphate = D-glyceraldehyde 3-phosphate + acetaldehyde. Its pathway is carbohydrate degradation; 2-deoxy-D-ribose 1-phosphate degradation; D-glyceraldehyde 3-phosphate and acetaldehyde from 2-deoxy-alpha-D-ribose 1-phosphate: step 2/2. Its function is as follows. Catalyzes a reversible aldol reaction between acetaldehyde and D-glyceraldehyde 3-phosphate to generate 2-deoxy-D-ribose 5-phosphate. The sequence is that of Deoxyribose-phosphate aldolase from Aeromonas salmonicida (strain A449).